Consider the following 179-residue polypeptide: ATP-dependent protease subunit HslV (179 aa).

Thr9 is a catalytic residue. Ala164, Cys167, and Thr170 together coordinate Na(+).

Belongs to the peptidase T1B family. HslV subfamily. A double ring-shaped homohexamer of HslV is capped on each side by a ring-shaped HslU homohexamer. The assembly of the HslU/HslV complex is dependent on binding of ATP.

Its subcellular location is the cytoplasm. The enzyme catalyses ATP-dependent cleavage of peptide bonds with broad specificity.. Its activity is regulated as follows. Allosterically activated by HslU binding. In terms of biological role, protease subunit of a proteasome-like degradation complex believed to be a general protein degrading machinery. The polypeptide is ATP-dependent protease subunit HslV (Syntrophobacter fumaroxidans (strain DSM 10017 / MPOB)).